Reading from the N-terminus, the 89-residue chain is MAVKIRLKRMGAKKKPFYRIVVADSRSPRDGRFIETIGTYNPVAEPAEIKIDEELALKWLQNGAKPSDTRSLLSKQGLLEKFHNLKYGK.

Belongs to the bacterial ribosomal protein bS16 family.

This Geobacillus stearothermophilus (Bacillus stearothermophilus) protein is Small ribosomal subunit protein bS16.